The chain runs to 519 residues: AAA-ATPase At4g30250 (519 aa).

A signal peptide spans 1-24; the sequence is MSDYWTTMASLLGMLAFCQTIVQL. Position 252–259 (252–259) interacts with ATP; the sequence is GPPGTGKS. 2 disordered regions span residues 315-335 and 467-519; these read GKNK…NGSG and KSVG…EKEK. Residues 479–488 are compositionally biased toward acidic residues; sequence QEEEEEAEEE. The span at 489 to 508 shows a compositional bias: basic and acidic residues; it reads QEKRALDSPNRRNREVCGFR. The span at 509–519 shows a compositional bias: acidic residues; it reads EEEEEEDEKEK.

Belongs to the AAA ATPase family. BCS1 subfamily. Mg(2+) serves as cofactor.

The enzyme catalyses ATP + H2O = ADP + phosphate + H(+). This chain is AAA-ATPase At4g30250, found in Arabidopsis thaliana (Mouse-ear cress).